Consider the following 416-residue polypeptide: Gamma-glutamyl phosphate reductase (416 aa).

This sequence belongs to the gamma-glutamyl phosphate reductase family.

It localises to the cytoplasm. The catalysed reaction is L-glutamate 5-semialdehyde + phosphate + NADP(+) = L-glutamyl 5-phosphate + NADPH + H(+). The protein operates within amino-acid biosynthesis; L-proline biosynthesis; L-glutamate 5-semialdehyde from L-glutamate: step 2/2. In terms of biological role, catalyzes the NADPH-dependent reduction of L-glutamate 5-phosphate into L-glutamate 5-semialdehyde and phosphate. The product spontaneously undergoes cyclization to form 1-pyrroline-5-carboxylate. In Streptococcus uberis (strain ATCC BAA-854 / 0140J), this protein is Gamma-glutamyl phosphate reductase.